The chain runs to 315 residues: MIQPPIGKKVLVEVPSTTANLGPGFDCLGAALSLTNFFTIKRIDGDSERFELIMESTEGNHLRGGPENLFYRAAQRVWKAAEVEPFALEARVKLAVPPARGLGSSATAIVAGLVGANALINDPLSKEKLLELAIDIEGHPDNVVPSLLGGLCFTAKAASQRWRVVKCDWDDSIKAVVAIPSLRLSTSEARRVMPKTVPLGDAVMNLGSLTLLLNGLRTGRQDLITDGMHDRLHEPYRWKLIKGGAQVCEAAINAGAFGCAISGAGPSILALCKEDKGRNISQAMVKAWESEGVASRAPLLNLQTKGSTWYSNQSK.

97–107 (PPARGLGSSAT) contributes to the ATP binding site.

Belongs to the GHMP kinase family. Homoserine kinase subfamily.

It is found in the cytoplasm. The enzyme catalyses L-homoserine + ATP = O-phospho-L-homoserine + ADP + H(+). It participates in amino-acid biosynthesis; L-threonine biosynthesis; L-threonine from L-aspartate: step 4/5. Catalyzes the ATP-dependent phosphorylation of L-homoserine to L-homoserine phosphate. The chain is Homoserine kinase from Prochlorococcus marinus (strain SARG / CCMP1375 / SS120).